The following is a 636-amino-acid chain: uncharacterized protein (636 aa).

A run of 3 helical transmembrane segments spans residues alanine 12 to isoleucine 32, isoleucine 34 to glycine 54, and isoleucine 75 to phenylalanine 95. An RCK N-terminal domain is found at lysine 112–serine 231.

The protein resides in the cell membrane. This is an uncharacterized protein from Methanothermus fervidus (strain ATCC 43054 / DSM 2088 / JCM 10308 / V24 S).